The primary structure comprises 272 residues: HMP-PP phosphatase (272 aa).

The Nucleophile role is filled by aspartate 8. Residues aspartate 8, aspartate 10, and aspartate 212 each coordinate Mg(2+).

It belongs to the HAD-like hydrolase superfamily. Cof family. Mg(2+) serves as cofactor.

It catalyses the reaction 4-amino-2-methyl-5-(diphosphooxymethyl)pyrimidine + H2O = 4-amino-2-methyl-5-(phosphooxymethyl)pyrimidine + phosphate + H(+). In terms of biological role, catalyzes the hydrolysis of 4-amino-2-methyl-5-hydroxymethylpyrimidine pyrophosphate (HMP-PP) to 4-amino-2-methyl-5-hydroxymethylpyrimidine phosphate (HMP-P). The polypeptide is HMP-PP phosphatase (Citrobacter koseri (strain ATCC BAA-895 / CDC 4225-83 / SGSC4696)).